Reading from the N-terminus, the 757-residue chain is Relaxin receptor 1 (757 aa).

The Extracellular portion of the chain corresponds to 1 to 409 (MTSGSVFFYI…ENLLASIIQR (409 aa)). Residues 26–63 (KCSLGYFPCGNITKCLPQLLHCNGVDDCGNQADEDNCG) form the LDL-receptor class A domain. Intrachain disulfides connect cysteine 27/cysteine 40, cysteine 34/cysteine 53, and cysteine 47/cysteine 62. An N-linked (GlcNAc...) asparagine glycan is attached at asparagine 36. Positions 45, 48, 50, 52, 58, and 59 each coordinate Ca(2+). Residues 91–127 (ETPECLVGSVPVQCLCQGLELDCDETNLRAVPSVSSN) enclose the LRRNT domain. Asparagine 127 carries N-linked (GlcNAc...) asparagine glycosylation. LRR repeat units lie at residues 151-172 (DLQK…AFRG), 175-196 (SLTK…VFED), 199-220 (RLEW…TFYG), 223-244 (SLIL…PLCQ), 248-269 (RLHW…TFIS), 272-293 (NLTV…TFAP), 296-317 (KLDE…IFKD), 320-341 (ELSQ…QFDY), and 344-365 (KLKS…MFRP). 2 N-linked (GlcNAc...) asparagine glycosylation sites follow: asparagine 264 and asparagine 272. Asparagine 325 carries N-linked (GlcNAc...) asparagine glycosylation. Residue asparagine 368 is glycosylated (N-linked (GlcNAc...) asparagine). The chain crosses the membrane as a helical span at residues 410 to 430 (VFVWVVSAVTCFGNIFVICMR). At 431 to 443 (PYIRSENKLYAMS) the chain is on the cytoplasmic side. A helical membrane pass occupies residues 444 to 464 (IISLCCADCLMGIYLFVIGGF). The Extracellular segment spans residues 465–486 (DLKFRGEYNKHAQLWMESTHCQ). Residues cysteine 485 and cysteine 563 are joined by a disulfide bond. A helical transmembrane segment spans residues 487–507 (LVGSLAILSTEVSVLLLTFLT). The Cytoplasmic portion of the chain corresponds to 508–527 (LEKYICIVYPFRCVRPGKCR). A helical membrane pass occupies residues 528–548 (TITVLILIWITGFIVAFIPLS). Residues 549–577 (NKEFFKNYYGTNGVCFPLHSEDTESIGAQ) are Extracellular-facing. The chain crosses the membrane as a helical span at residues 578 to 598 (IYSVAIFLGINLAAFIIIVFS). The Cytoplasmic portion of the chain corresponds to 599–629 (YGSMFYSVHQSAITATEIRNQVKKEMILAKR). The helical transmembrane segment at 630–650 (FFFIVFTDALCWIPIFVVKFL) threads the bilayer. Residue serine 651 is a topological domain, extracellular. The chain crosses the membrane as a helical span at residues 652 to 672 (LLQVEIPGTITSWVVIFILPI). Over 673–757 (NSALNPILYT…SQSTRLNSYS (85 aa)) the chain is Cytoplasmic.

The protein belongs to the G-protein coupled receptor 1 family. As to quaternary structure, interacts with C1QTNF8. As to expression, expressed in the brain, kidney, testis, placenta, uterus, ovary, adrenal, prostate, skin and heart. Not detected in spleen.

Its subcellular location is the cell membrane. Receptor for relaxins. The activity of this receptor is mediated by G proteins leading to stimulation of adenylate cyclase and an increase of cAMP. Binding of the ligand may also activate a tyrosine kinase pathway that inhibits the activity of a phosphodiesterase that degrades cAMP. This is Relaxin receptor 1 (RXFP1) from Homo sapiens (Human).